The primary structure comprises 689 residues: DNA ligase (689 aa).

NAD(+)-binding positions include 40-44 (DSEYD), 89-90 (SL), and glutamate 121. The active-site N6-AMP-lysine intermediate is the lysine 123. The NAD(+) site is built by arginine 144, glutamate 179, lysine 295, and lysine 319. Residues cysteine 413, cysteine 416, cysteine 431, and cysteine 437 each coordinate Zn(2+). The BRCT domain maps to 610-689 (REQSSLTDKI…EEWLTLIKNV (80 aa)).

This sequence belongs to the NAD-dependent DNA ligase family. LigA subfamily. Requires Mg(2+) as cofactor. It depends on Mn(2+) as a cofactor.

It catalyses the reaction NAD(+) + (deoxyribonucleotide)n-3'-hydroxyl + 5'-phospho-(deoxyribonucleotide)m = (deoxyribonucleotide)n+m + AMP + beta-nicotinamide D-nucleotide.. Its function is as follows. DNA ligase that catalyzes the formation of phosphodiester linkages between 5'-phosphoryl and 3'-hydroxyl groups in double-stranded DNA using NAD as a coenzyme and as the energy source for the reaction. It is essential for DNA replication and repair of damaged DNA. The protein is DNA ligase of Rickettsia massiliae (strain Mtu5).